We begin with the raw amino-acid sequence, 255 residues long: Antigen LPMC-61 (255 aa).

12 consecutive repeat copies span residues 18-48 (WPERQQQQQPQPWLDRQQQQQQHNQQLQKQQ), 49-57 (WPEGQRQQL), 58-65 (WPEQQQQQ), 66-78 (WPEQHQQAQQQQQ), 79-90 (WPQQQPQMQQEQ), 91-103 (WPQQQPQVQQQQQ), 104-140 (WPQQQHRRQHGQQQQCMNSQQQLQQCGQQQQQQLQQQ), 141-152 (WSEQQQQQQQQQ), 153-164 (WPEQPEQQQQQQ), 165-172 (WPEQQQQQ), 173-192 (WSDQNQQQQAQQWQAQQQQQ), and 193-210 (WPQQQQQPQQQQQQQQQQ). A disordered region spans residues 18–90 (WPERQQQQQP…QQQPQMQQEQ (73 aa)). Positions 18-210 (WPERQQQQQP…QQQQQQQQQQ (193 aa)) are 12 X approximate tandem repeats, Gln-rich. The segment covering 149-210 (QQQQWPEQPE…QQQQQQQQQQ (62 aa)) has biased composition (low complexity). Positions 149–224 (QQQQWPEQPE…DGVGIVVPYL (76 aa)) are disordered.

In terms of assembly, may be covalently linked by disulfide bonds to other polypeptides to form the 80 kDa antigen.

Unknown. The Gln-rich tandem repeats may be important for an unknown aspect of the parasitic life cycle. May be an important immunogen. This is Antigen LPMC-61 from Eimeria tenella (Coccidian parasite).